The chain runs to 188 residues: RWD domain-containing protein 4 (188 aa).

The RWD domain maps to 9 to 111 (MELEALRSIY…EYAKDNKEQF (103 aa)). The tract at residues 132-167 (TPSAAPSSKKKDKKEQLSKAQKRKLADKTDHKGELP) is disordered. Residues 155–166 (KLADKTDHKGEL) are compositionally biased toward basic and acidic residues.

In Rattus norvegicus (Rat), this protein is RWD domain-containing protein 4 (Rwdd4).